The following is a 94-amino-acid chain: Small ribosomal subunit protein uS17 (94 aa).

Belongs to the universal ribosomal protein uS17 family. As to quaternary structure, part of the 30S ribosomal subunit.

Its function is as follows. One of the primary rRNA binding proteins, it binds specifically to the 5'-end of 16S ribosomal RNA. In Symbiobacterium thermophilum (strain DSM 24528 / JCM 14929 / IAM 14863 / T), this protein is Small ribosomal subunit protein uS17.